A 445-amino-acid polypeptide reads, in one-letter code: Xylose isomerase (445 aa).

Residues His-107 and Asp-110 contribute to the active site. The Mg(2+) site is built by Glu-238, Glu-274, His-277, Asp-302, Asp-313, Asp-315, and Asp-345.

This sequence belongs to the xylose isomerase family. Homotetramer. Mg(2+) serves as cofactor.

It localises to the cytoplasm. It carries out the reaction alpha-D-xylose = alpha-D-xylulofuranose. In Bacillus pumilus (strain SAFR-032), this protein is Xylose isomerase.